The chain runs to 196 residues: Nucleoside triphosphate pyrophosphatase (196 aa).

Asp73 functions as the Proton acceptor in the catalytic mechanism.

It belongs to the Maf family. It depends on a divalent metal cation as a cofactor.

It is found in the cytoplasm. The enzyme catalyses a ribonucleoside 5'-triphosphate + H2O = a ribonucleoside 5'-phosphate + diphosphate + H(+). It catalyses the reaction a 2'-deoxyribonucleoside 5'-triphosphate + H2O = a 2'-deoxyribonucleoside 5'-phosphate + diphosphate + H(+). Nucleoside triphosphate pyrophosphatase. May have a dual role in cell division arrest and in preventing the incorporation of modified nucleotides into cellular nucleic acids. The sequence is that of Nucleoside triphosphate pyrophosphatase from Anaplasma marginale (strain St. Maries).